A 276-amino-acid polypeptide reads, in one-letter code: Methylesterase 17 (276 aa).

The AB hydrolase-1 domain occupies proline 19–proline 138. Residue serine 95 is the Acyl-ester intermediate of the active site. Catalysis depends on charge relay system residues aspartate 225 and histidine 252.

The protein belongs to the AB hydrolase superfamily. Methylesterase family. In terms of tissue distribution, expressed in several tissues of seedlings and adult plants, with a higher relative level of expression in the seedling shoot apex and the adult stem.

The enzyme catalyses methyl (indol-3-yl)acetate + H2O = (indol-3-yl)acetate + methanol + H(+). Its pathway is plant hormone biosynthesis. Functionally, methylesterase that efficiently and specifically hydrolyzes methyl indole-3-acetic acid (MeIAA) to IAA (auxin). MeIAA is believed to be an inactive form of auxin that needs to be demethylated to exert a biological effect. The polypeptide is Methylesterase 17 (Arabidopsis thaliana (Mouse-ear cress)).